The primary structure comprises 236 residues: Uridylate kinase (236 aa).

An ATP-binding site is contributed by 8–11; it reads KLSG. The interval 16–21 is involved in allosteric activation by GTP; that stretch reads GEQGYG. ATP is bound by residues Gly-51 and Arg-55. UMP is bound by residues Asp-70 and 131-138; that span reads TGNPYFST. ATP is bound by residues Asn-159, Tyr-165, and Asp-168.

The protein belongs to the UMP kinase family. Homohexamer.

It localises to the cytoplasm. It carries out the reaction UMP + ATP = UDP + ADP. The protein operates within pyrimidine metabolism; CTP biosynthesis via de novo pathway; UDP from UMP (UMPK route): step 1/1. With respect to regulation, allosterically activated by GTP. Inhibited by UTP. Its function is as follows. Catalyzes the reversible phosphorylation of UMP to UDP. The polypeptide is Uridylate kinase (Shouchella clausii (strain KSM-K16) (Alkalihalobacillus clausii)).